A 501-amino-acid polypeptide reads, in one-letter code: Glycerol kinase 1 (501 aa).

Residue Thr-16 coordinates ADP. Residues Thr-16, Thr-17, and Ser-18 each contribute to the ATP site. Thr-16 is a binding site for sn-glycerol 3-phosphate. Arg-20 serves as a coordination point for ADP. The sn-glycerol 3-phosphate site is built by Arg-84, Glu-85, Tyr-135, and Asp-242. Positions 84, 85, 135, 242, and 243 each coordinate glycerol. Residues Thr-264 and Gly-307 each coordinate ADP. Residues Thr-264, Gly-307, Gln-311, and Gly-408 each coordinate ATP. Gly-408 contributes to the ADP binding site.

The protein belongs to the FGGY kinase family.

The catalysed reaction is glycerol + ATP = sn-glycerol 3-phosphate + ADP + H(+). It participates in polyol metabolism; glycerol degradation via glycerol kinase pathway; sn-glycerol 3-phosphate from glycerol: step 1/1. Functionally, key enzyme in the regulation of glycerol uptake and metabolism. Catalyzes the phosphorylation of glycerol to yield sn-glycerol 3-phosphate. The polypeptide is Glycerol kinase 1 (Saccharolobus solfataricus (strain ATCC 35092 / DSM 1617 / JCM 11322 / P2) (Sulfolobus solfataricus)).